The primary structure comprises 444 residues: Bifunctional enolase 2/transcriptional activator (444 aa).

Substrate is bound by residues histidine 163 and glutamate 172. The active-site Proton donor is the glutamate 215. Positions 250, 300, and 327 each coordinate Mg(2+). The substrate site is built by glutamate 300 and aspartate 327. Lysine 352 serves as the catalytic Proton acceptor. Substrate is bound by residues 379 to 382 and lysine 403; that span reads SHRS.

The protein belongs to the enolase family. As to quaternary structure, homodimer. Requires Mg(2+) as cofactor.

The protein localises to the cytoplasm. The protein resides in the cytosol. Its subcellular location is the nucleus. It is found in the mitochondrion outer membrane. The enzyme catalyses (2R)-2-phosphoglycerate = phosphoenolpyruvate + H2O. It participates in carbohydrate degradation; glycolysis; pyruvate from D-glyceraldehyde 3-phosphate: step 4/5. Functionally, multifunctional enzyme that acts as an enolase involved in the metabolism and as a positive regulator of cold-responsive gene transcription. Binds to the cis-element the gene promoter of STZ/ZAT10, a zinc finger transcriptional repressor. This is Bifunctional enolase 2/transcriptional activator (ENO2) from Arabidopsis thaliana (Mouse-ear cress).